The following is a 286-amino-acid chain: 4-diphosphocytidyl-2-C-methyl-D-erythritol kinase (286 aa).

Lys10 is a catalytic residue. ATP is bound at residue Pro94–Ser104. Residue Asp136 is part of the active site.

This sequence belongs to the GHMP kinase family. IspE subfamily.

The catalysed reaction is 4-CDP-2-C-methyl-D-erythritol + ATP = 4-CDP-2-C-methyl-D-erythritol 2-phosphate + ADP + H(+). It participates in isoprenoid biosynthesis; isopentenyl diphosphate biosynthesis via DXP pathway; isopentenyl diphosphate from 1-deoxy-D-xylulose 5-phosphate: step 3/6. Catalyzes the phosphorylation of the position 2 hydroxy group of 4-diphosphocytidyl-2C-methyl-D-erythritol. This Exiguobacterium sibiricum (strain DSM 17290 / CCUG 55495 / CIP 109462 / JCM 13490 / 255-15) protein is 4-diphosphocytidyl-2-C-methyl-D-erythritol kinase.